A 256-amino-acid chain; its full sequence is Adenylate kinase (256 aa).

45 to 50 (GAGKGT) lines the ATP pocket. Residues 67-96 (ATGDLLRQQVAMGTDLGKQAKKIMDQGALV) are NMP. Residues Thr68, Arg73, 94–96 (ALV), 123–126 (GFPR), and Gln130 contribute to the AMP site. Residues 164-201 (GRLIHPGSGRSYHKIFSPPKQPMKDDITGEPLVQRSDD) are LID. ATP contacts are provided by residues Arg165 and 174 to 175 (SY). AMP-binding residues include Arg198 and Arg209. Gln237 is a binding site for ATP.

This sequence belongs to the adenylate kinase family. AK2 subfamily. Monomer.

It is found in the cytoplasm. Its subcellular location is the cytosol. The protein localises to the mitochondrion intermembrane space. The catalysed reaction is AMP + ATP = 2 ADP. Its function is as follows. Catalyzes the reversible transfer of the terminal phosphate group between ATP and AMP. Plays an important role in cellular energy homeostasis and in adenine nucleotide metabolism. Adenylate kinase activity is critical for regulation of the phosphate utilization and the AMP de novo biosynthesis pathways. The chain is Adenylate kinase from Malassezia globosa (strain ATCC MYA-4612 / CBS 7966) (Dandruff-associated fungus).